A 603-amino-acid chain; its full sequence is F-box only protein 46 (603 aa).

A disordered region spans residues 18-54 (SKYSQNQPRPPSTALKPPVCPDTSSGTEPDHRPAHLE). 2 positions are modified to phosphoserine: serine 21 and serine 67. Disordered stretches follow at residues 113–165 (SRAS…SSGD), 235–301 (EAQR…TRAK), 332–359 (EASE…ARDC), and 412–442 (QSRG…GTTD). Threonine 347 is modified (phosphothreonine). 2 stretches are compositionally biased toward pro residues: residues 347–356 (TPPAPPPPPA) and 417–426 (EGPPEPPPAD). Residues 470–522 (RQYMLLLPEHVLVKIFSFLPTRALAALKCTCHHFKGIIEAFGVRATDSRWSRD) enclose the F-box domain.

Part of a SCF (SKP1-cullin-F-box) protein ligase complex SCF(FBXO46) composed of CUL1, SKP1, RBX1 and FBXO46. Post-translationally, phosphorylated by ATM in response to DNA damage, promoting ubiquitination and degradation by the SCF(FBXO31) complex. ATM-phosphorylated FBXO46 is ubiquitinated and degradaded by the SCF(FBXO31) complex in response to DNA damage.

It functions in the pathway protein modification; protein ubiquitination. Substrate-recognition component of the SCF(FBXO46) protein ligase complex, which mediates the ubiquitination and degradation of target proteins. In absence of stress, the SCF(FBXO46) complex catalyzes ubiquitination and degradation of MTOR-phosphorylated FBXO31. The sequence is that of F-box only protein 46 (Fbxo46) from Mus musculus (Mouse).